The sequence spans 381 residues: L-lactate dehydrogenase (381 aa).

Residues 1 to 380 form the FMN hydroxy acid dehydrogenase domain; that stretch reads MIISASTDYR…TRDSLVRELG (380 aa). Y24 serves as a coordination point for substrate. Positions 106 and 127 each coordinate FMN. Y129 is a binding site for substrate. T155 is a binding site for FMN. R164 is a substrate binding site. K251 serves as a coordination point for FMN. The active-site Proton acceptor is the H275. R278 lines the substrate pocket. 306-330 lines the FMN pocket; the sequence is DSGIRSGLDVVRMIALGADTVLIGR.

It belongs to the FMN-dependent alpha-hydroxy acid dehydrogenase family. Homotetramer. It depends on FMN as a cofactor.

It localises to the cell inner membrane. It catalyses the reaction (S)-lactate + A = pyruvate + AH2. Catalyzes the conversion of L-lactate to pyruvate. Is coupled to the respiratory chain. This chain is L-lactate dehydrogenase, found in Pseudomonas entomophila (strain L48).